The following is a 447-amino-acid chain: Tektin-4 (447 aa).

Coiled-coil stretches lie at residues 69 to 144 and 304 to 423; these read ADRD…ALDA and FGRR…TNSL. The segment covering 72-81 has biased composition (basic and acidic residues); it reads DQSERQRHES. The segment at 72-104 is disordered; that stretch reads DQSERQRHESQQLAAETEALAQRTQQDSTRKVG. Residues 82-97 show a composition bias toward low complexity; sequence QQLAAETEALAQRTQQ.

This sequence belongs to the tektin family. In terms of assembly, microtubule inner protein component of sperm flagellar doublet microtubules. Ubiquitinated, leading to its degradation. Deubiquitinated by USP16, promoting its stability. As to expression, expressed in trachea multiciliated cells.

It is found in the cytoplasm. The protein resides in the cytoskeleton. The protein localises to the cilium axoneme. Its subcellular location is the flagellum axoneme. Its function is as follows. Microtubule inner protein (MIP) part of the dynein-decorated doublet microtubules (DMTs) in cilia and flagellar axoneme. Forms filamentous polymers in the walls of ciliary and flagellar microtubules. Contributes to normal sperm motility. This Bos taurus (Bovine) protein is Tektin-4 (TEKT4).